Here is a 601-residue protein sequence, read N- to C-terminus: MDIKDKSLKELEELSSQIRERIIDVVSRKGGHFSSTLGAVELTLGMHYVFDAYSDPFIFDVSHQCYPHKLLTSRWDEFETIRQFGGLSGFTKPKESPADYFVAGHSSTSISLAVGAAKSIKLKKENKVPIVMIGDGSMSAGMVYEALNELGDLKLPVVIILNDNEMSIAKPIGAISKYLSKILAGKYYQSFKSKVDKFIRKNMPEGTTYLAKRFEEAFKLITPGILFEEMGIDYIGPIDGHDLKEVIETLQIAKAMQKPVIVHAHTIKGKGYKIAEGQHEEWHGVGPFNIEDGEFIKKEAPKSATAVFSDALLNLACKYENVVGVTAAMPSGTGINKLMDEFPERFWDVAIAEQHAITSMAAMAKEGFKPFITIYSTFLQRGFDQIIHDVCLMNLPVVFAMDRAGIVGNDGETHQGAFDISFLRFIPNMVLFAPRDNETLEQSLEFAYNLNNPCAIRYPRGAFKKLNFVPTPFVLGKAEILKTGISNKLFIGYGAGVSRAIDTEALHNEDITVVDLRFVKPLDKNLLLELSKKYNDWYIFSDSQKQSGVGSAILEFLNDEKIHNVQLTSFEYNDKFIEHGDTKLVEQSLGLLPEQLVQKIK.

Thiamine diphosphate contacts are provided by residues His63 and 104-106 (GHS). Asp135 contributes to the Mg(2+) binding site. Thiamine diphosphate is bound by residues 136 to 137 (GS), Asn164, Tyr272, and Glu353. Asn164 serves as a coordination point for Mg(2+).

This sequence belongs to the transketolase family. DXPS subfamily. As to quaternary structure, homodimer. Requires Mg(2+) as cofactor. It depends on thiamine diphosphate as a cofactor.

It catalyses the reaction D-glyceraldehyde 3-phosphate + pyruvate + H(+) = 1-deoxy-D-xylulose 5-phosphate + CO2. Its pathway is metabolic intermediate biosynthesis; 1-deoxy-D-xylulose 5-phosphate biosynthesis; 1-deoxy-D-xylulose 5-phosphate from D-glyceraldehyde 3-phosphate and pyruvate: step 1/1. In terms of biological role, catalyzes the acyloin condensation reaction between C atoms 2 and 3 of pyruvate and glyceraldehyde 3-phosphate to yield 1-deoxy-D-xylulose-5-phosphate (DXP). The chain is 1-deoxy-D-xylulose-5-phosphate synthase from Aliarcobacter butzleri (strain RM4018) (Arcobacter butzleri).